A 305-amino-acid polypeptide reads, in one-letter code: UDP-3-O-acyl-N-acetylglucosamine deacetylase (305 aa).

The Zn(2+) site is built by H78, H237, and D241. The active-site Proton donor is the H264.

Belongs to the LpxC family. Zn(2+) is required as a cofactor.

It carries out the reaction a UDP-3-O-[(3R)-3-hydroxyacyl]-N-acetyl-alpha-D-glucosamine + H2O = a UDP-3-O-[(3R)-3-hydroxyacyl]-alpha-D-glucosamine + acetate. Its pathway is glycolipid biosynthesis; lipid IV(A) biosynthesis; lipid IV(A) from (3R)-3-hydroxytetradecanoyl-[acyl-carrier-protein] and UDP-N-acetyl-alpha-D-glucosamine: step 2/6. Catalyzes the hydrolysis of UDP-3-O-myristoyl-N-acetylglucosamine to form UDP-3-O-myristoylglucosamine and acetate, the committed step in lipid A biosynthesis. The chain is UDP-3-O-acyl-N-acetylglucosamine deacetylase from Cupriavidus metallidurans (strain ATCC 43123 / DSM 2839 / NBRC 102507 / CH34) (Ralstonia metallidurans).